We begin with the raw amino-acid sequence, 528 residues long: Carboxysome shell carbonic anhydrase (528 aa).

The interval Pro17–Glu47 is disordered. Cys184 is a Zn(2+) binding site. The active-site Proton acceptor is Asp186. Zn(2+) contacts are provided by His252 and Cys263.

This sequence belongs to the beta-class carbonic anhydrase family. CsoSCA subfamily. Homodimer. Zn(2+) is required as a cofactor.

Its subcellular location is the carboxysome. It catalyses the reaction hydrogencarbonate + H(+) = CO2 + H2O. Inhibited by ethoxyzolamide and dithiothreitol (in crude extracts upon expression in E.coli). Its function is as follows. Reversible hydration of carbon dioxide. This bacteria encodes at least 3 CA enzymes. Essential for chemolithotrophic carbon dioxide fixation, supplies CO(2) to RuBisCO (ribulose bisphosphate carboxylase, cbbL-cbbS) in the carboxysome. The chain is Carboxysome shell carbonic anhydrase from Hydrogenovibrio crunogenus (strain DSM 25203 / XCL-2) (Thiomicrospira crunogena).